The following is a 48-amino-acid chain: M-oxotoxin-Ot1c (48 aa).

It localises to the secreted. The protein localises to the target cell membrane. In terms of biological role, disrupts cell membranes, particularly those rich in phosphocholine, through formation of pores. Has antimicrobial activity, hemolytic activity and insecticidal activity. In Oxyopes takobius (Lynx spider), this protein is M-oxotoxin-Ot1c.